We begin with the raw amino-acid sequence, 425 residues long: Pleckstrin homology domain-containing family A member 2 (425 aa).

The region spanning 7 to 113 is the PH 1 domain; that stretch reads QNRICGFLDI…WVEALNQASK (107 aa). A Glycyl lysine isopeptide (Lys-Gly) (interchain with G-Cter in SUMO2) cross-link involves residue Lys-141. Ser-184 is subject to Phosphoserine. Positions 198-298 constitute a PH 2 domain; it reads PLIKSGYCVK…WIKEIGAAVQ (101 aa). Residues Ser-314 and Ser-349 each carry the phosphoserine modification. The segment at 374–410 is disordered; it reads AEDSLFTPRLGESSTSAVLPSSRIRHRSEPQHPKEKP. Positions 400 to 410 are enriched in basic and acidic residues; the sequence is RSEPQHPKEKP.

In terms of assembly, binds MPDZ and PTPN13.

The protein localises to the cytoplasm. It is found in the cell membrane. Its subcellular location is the nucleus. In terms of biological role, binds specifically to phosphatidylinositol 3,4-diphosphate (PtdIns3,4P2), but not to other phosphoinositides. May recruit other proteins to the plasma membrane. The chain is Pleckstrin homology domain-containing family A member 2 (PLEKHA2) from Bos taurus (Bovine).